The sequence spans 61 residues: Small ribosomal subunit protein uS14 (61 aa).

4 residues coordinate Zn(2+): Cys-24, Cys-27, Cys-40, and Cys-43.

Belongs to the universal ribosomal protein uS14 family. Zinc-binding uS14 subfamily. In terms of assembly, part of the 30S ribosomal subunit. Contacts proteins S3 and S10. Zn(2+) is required as a cofactor.

Binds 16S rRNA, required for the assembly of 30S particles and may also be responsible for determining the conformation of the 16S rRNA at the A site. The polypeptide is Small ribosomal subunit protein uS14 (Acetivibrio thermocellus (strain ATCC 27405 / DSM 1237 / JCM 9322 / NBRC 103400 / NCIMB 10682 / NRRL B-4536 / VPI 7372) (Clostridium thermocellum)).